The sequence spans 113 residues: UPF0339 protein MS1092 (113 aa).

2 repeat units span residues 11 to 59 (AKDG…NFEF) and 62 to 110 (NKNG…IKDI).

The protein belongs to the UPF0339 family. Duplicated subfamily.

The protein is UPF0339 protein MS1092 of Mannheimia succiniciproducens (strain KCTC 0769BP / MBEL55E).